The sequence spans 122 residues: Large ribosomal subunit protein uL14 (122 aa).

This sequence belongs to the universal ribosomal protein uL14 family. In terms of assembly, part of the 50S ribosomal subunit. Forms a cluster with proteins L3 and L19. In the 70S ribosome, L14 and L19 interact and together make contacts with the 16S rRNA in bridges B5 and B8.

Binds to 23S rRNA. Forms part of two intersubunit bridges in the 70S ribosome. The polypeptide is Large ribosomal subunit protein uL14 (Rickettsia rickettsii (strain Iowa)).